The primary structure comprises 188 residues: GMP synthase [glutamine-hydrolyzing] subunit A (188 aa).

The region spanning 1-188 (MIVILDNGGQ…FCKVCGYKFE (188 aa)) is the Glutamine amidotransferase type-1 domain. The active-site Nucleophile is the Cys-76. Residues His-163 and Glu-165 contribute to the active site.

Heterodimer composed of a glutamine amidotransferase subunit (A) and a GMP-binding subunit (B).

It carries out the reaction XMP + L-glutamine + ATP + H2O = GMP + L-glutamate + AMP + diphosphate + 2 H(+). The protein operates within purine metabolism; GMP biosynthesis; GMP from XMP (L-Gln route): step 1/1. In terms of biological role, catalyzes the synthesis of GMP from XMP. The chain is GMP synthase [glutamine-hydrolyzing] subunit A from Methanocaldococcus jannaschii (strain ATCC 43067 / DSM 2661 / JAL-1 / JCM 10045 / NBRC 100440) (Methanococcus jannaschii).